A 496-amino-acid polypeptide reads, in one-letter code: MGMHIEMKNISKAFNGNPVLKNAQFMIETGEVHALMGENGAGKSTLMKILTGVYKKDGGTIKIDGQERTFKNAKEAEEYGIAFIHQELNILPNLTVAENMFLGKELMYGKTGILRTRQMNAIAQQQLAELGLHVRGAMLAEELSVGQQQIIEIAKALMTNASVIIMDEPTAALTDREIETLFTVINKLRKEGVSFVYISHRMEEIFSICDAITILRDGEYVGKRLIPETSFDEVVSMMVGRSIGERYPERNSQIGDVIFEMRNGTKKGKFENVSFQVRKGEILGVAGLMGAGRTDIMKAIFGYEPLDSGQIFINGQEVKIDSPIDAIRQRIAFITEDRKSEGLVLDFSIRENLALPNLENLSKGSVLSNELEQQFTEDMMKLLNVKASSGEQAVKSLSGGNQQKIVIAKWLGIHPQLLILDEPTRGVDVGAKKEIYSIMNKLTEQGDAVIMVSSELPEVLGMSDRVLVIHEGKVGGILGKDEASQESIMALATGGE.

2 consecutive ABC transporter domains span residues 5 to 242 (IEMK…VGRS) and 252 to 496 (SQIG…TGGE). Residue 37–44 (GENGAGKS) participates in ATP binding.

It belongs to the ABC transporter superfamily. Ribose importer (TC 3.A.1.2.1) family. The complex is composed of an ATP-binding protein (RbsA), two transmembrane proteins (RbsC) and a solute-binding protein (RbsB).

The protein resides in the cell membrane. The enzyme catalyses D-ribose(out) + ATP + H2O = D-ribose(in) + ADP + phosphate + H(+). Its function is as follows. Part of the ABC transporter complex RbsABC involved in ribose import. Responsible for energy coupling to the transport system. The protein is Ribose import ATP-binding protein RbsA of Bacillus cereus (strain ATCC 14579 / DSM 31 / CCUG 7414 / JCM 2152 / NBRC 15305 / NCIMB 9373 / NCTC 2599 / NRRL B-3711).